The following is a 312-amino-acid chain: Olfactory receptor 1J21 (312 aa).

7 consecutive transmembrane segments (helical) span residues 29–49 (ALFL…ILLI), 58–78 (PMYF…SVTA), 95–115 (AGCV…NFLL), 143–163 (LLVM…TLLF), 197–217 (LVIL…ILVS), 241–261 (CGSH…LYFF), and 272–292 (VIVA…IYSL).

Belongs to the G-protein coupled receptor 1 family.

The protein resides in the cell membrane. Functionally, odorant receptor. Activated by (+) and (-)-carvone. The sequence is that of Olfactory receptor 1J21 from Mus musculus (Mouse).